We begin with the raw amino-acid sequence, 267 residues long: Methylglyoxal reductase DkgB (267 aa).

Tyr39 (proton donor) is an active-site residue. Residue His97 participates in substrate binding. 179–231 is a binding site for NADP(+); sequence MTLAYGKALKDEVIARIAAKHNATPAQVILAWAMGEGYSVIPSSTRRENLASS.

The protein belongs to the aldo/keto reductase family. Monomer.

The protein resides in the cytoplasm. It carries out the reaction hydroxyacetone + NADP(+) = methylglyoxal + NADPH + H(+). Aldo-keto reductase that significantly contributes to cellular methylglyoxal detoxification by catalyzing the NADPH-dependent conversion of methylglyoxal to acetol. This Salmonella typhimurium (strain LT2 / SGSC1412 / ATCC 700720) protein is Methylglyoxal reductase DkgB.